Consider the following 529-residue polypeptide: AAA ATPase forming ring-shaped complexes (529 aa).

Residues Met15–Gly62 adopt a coiled-coil conformation. Gly253–Leu258 provides a ligand contact to ATP.

The protein belongs to the AAA ATPase family. In terms of assembly, homohexamer. Assembles into a hexameric ring structure.

This chain is AAA ATPase forming ring-shaped complexes, found in Bifidobacterium dentium (strain ATCC 27534 / DSM 20436 / JCM 1195 / Bd1).